Here is a 496-residue protein sequence, read N- to C-terminus: probable leucine aminopeptidase 2 (496 aa).

Positions 1–16 (MRSLLWASLLSGVLAG) are cleaved as a signal peptide. Positions 111–205 (PSVEVTADVA…SLEDGQKLIK (95 aa)) constitute a PA domain. Asn224 carries an N-linked (GlcNAc...) asparagine glycan. The Zn(2+) site is built by His248 and Asp260. Glu292 serves as the catalytic Proton acceptor. Glu293 serves as a coordination point for Zn(2+). Asn307 carries an N-linked (GlcNAc...) asparagine glycan. Position 321 (Asp321) interacts with Zn(2+). N-linked (GlcNAc...) asparagine glycosylation is found at Asn341 and Asn402. His419 serves as a coordination point for Zn(2+). N-linked (GlcNAc...) asparagine glycosylation is found at Asn424 and Asn458. The tract at residues 475–496 (KRAPKTHAHVSGSGCWHSQVEA) is disordered.

It belongs to the peptidase M28 family. M28A subfamily. In terms of assembly, monomer. Zn(2+) serves as cofactor.

The protein resides in the secreted. In terms of biological role, extracellular aminopeptidase that releases a wide variety of amino acids from natural peptides. In Aspergillus oryzae (strain ATCC 42149 / RIB 40) (Yellow koji mold), this protein is probable leucine aminopeptidase 2 (lap2).